A 282-amino-acid polypeptide reads, in one-letter code: Orotidine 5'-phosphate decarboxylase (282 aa).

Lysine 95 functions as the Proton donor in the catalytic mechanism.

The protein belongs to the OMP decarboxylase family. Type 2 subfamily.

It carries out the reaction orotidine 5'-phosphate + H(+) = UMP + CO2. It participates in pyrimidine metabolism; UMP biosynthesis via de novo pathway; UMP from orotate: step 2/2. This is Orotidine 5'-phosphate decarboxylase (pyrF) from Mycobacterium leprae (strain TN).